A 97-amino-acid chain; its full sequence is Co-chaperonin GroES (97 aa).

This sequence belongs to the GroES chaperonin family. In terms of assembly, heptamer of 7 subunits arranged in a ring. Interacts with the chaperonin GroEL.

It is found in the cytoplasm. Its function is as follows. Together with the chaperonin GroEL, plays an essential role in assisting protein folding. The GroEL-GroES system forms a nano-cage that allows encapsulation of the non-native substrate proteins and provides a physical environment optimized to promote and accelerate protein folding. GroES binds to the apical surface of the GroEL ring, thereby capping the opening of the GroEL channel. The chain is Co-chaperonin GroES from Aeromonas salmonicida (strain A449).